The sequence spans 438 residues: Trigger factor (438 aa).

Residues 160-231 (SDQVTIEEQG…IMDVKTKQLQ (72 aa)) form the PPIase FKBP-type domain. The tract at residues 407-438 (AQLSGPQAETVAADQGEQQAEGQEESAEKSEE) is disordered. Low complexity predominate over residues 418–427 (AADQGEQQAE).

The protein belongs to the FKBP-type PPIase family. Tig subfamily.

The protein localises to the cytoplasm. It catalyses the reaction [protein]-peptidylproline (omega=180) = [protein]-peptidylproline (omega=0). Functionally, involved in protein export. Acts as a chaperone by maintaining the newly synthesized protein in an open conformation. Functions as a peptidyl-prolyl cis-trans isomerase. This Deinococcus deserti (strain DSM 17065 / CIP 109153 / LMG 22923 / VCD115) protein is Trigger factor.